A 275-amino-acid polypeptide reads, in one-letter code: Sulfur carrier protein FdhD (275 aa).

Cys-121 (cysteine persulfide intermediate) is an active-site residue. Residue 258-263 participates in Mo-bis(molybdopterin guanine dinucleotide) binding; the sequence is FSKPGR.

The protein belongs to the FdhD family.

The protein localises to the cytoplasm. Functionally, required for formate dehydrogenase (FDH) activity. Acts as a sulfur carrier protein that transfers sulfur from IscS to the molybdenum cofactor prior to its insertion into FDH. The sequence is that of Sulfur carrier protein FdhD from Yersinia enterocolitica serotype O:8 / biotype 1B (strain NCTC 13174 / 8081).